Reading from the N-terminus, the 247-residue chain is MADS-box transcription factor 1 (247 aa).

In terms of domain architecture, MADS-box spans 1-61; that stretch reads MGRGRVELKR…GKLYEFCSTS (61 aa). The region spanning 91-181 is the K-box domain; that stretch reads ELSSQQEYLK…RQRMEGYQIN (91 aa).

As to expression, expressed abundantly in the seed coat and to lesser extent in young buds, carpels, petals, and stamen.

It localises to the nucleus. In terms of biological role, probable transcription factor. In Pisum sativum (Garden pea), this protein is MADS-box transcription factor 1.